A 117-amino-acid polypeptide reads, in one-letter code: uncharacterized protein (117 aa).

This is an uncharacterized protein from Escherichia coli O157:H7.